A 326-amino-acid polypeptide reads, in one-letter code: MEMO1 family protein TTHA0924 (326 aa).

It belongs to the MEMO1 family.

The protein is MEMO1 family protein TTHA0924 of Thermus thermophilus (strain ATCC 27634 / DSM 579 / HB8).